Reading from the N-terminus, the 595-residue chain is Proline--tRNA ligase (595 aa).

It belongs to the class-II aminoacyl-tRNA synthetase family. ProS type 1 subfamily. Homodimer.

It localises to the cytoplasm. The catalysed reaction is tRNA(Pro) + L-proline + ATP = L-prolyl-tRNA(Pro) + AMP + diphosphate. Catalyzes the attachment of proline to tRNA(Pro) in a two-step reaction: proline is first activated by ATP to form Pro-AMP and then transferred to the acceptor end of tRNA(Pro). As ProRS can inadvertently accommodate and process non-cognate amino acids such as alanine and cysteine, to avoid such errors it has two additional distinct editing activities against alanine. One activity is designated as 'pretransfer' editing and involves the tRNA(Pro)-independent hydrolysis of activated Ala-AMP. The other activity is designated 'posttransfer' editing and involves deacylation of mischarged Ala-tRNA(Pro). The misacylated Cys-tRNA(Pro) is not edited by ProRS. This Treponema denticola (strain ATCC 35405 / DSM 14222 / CIP 103919 / JCM 8153 / KCTC 15104) protein is Proline--tRNA ligase.